The following is a 383-amino-acid chain: Chorismate synthase (383 aa).

2 residues coordinate NADP(+): arginine 40 and arginine 46. FMN contacts are provided by residues 128–130 (RAS), glycine 291, 306–310 (KPIPT), and arginine 332.

This sequence belongs to the chorismate synthase family. Homotetramer. The cofactor is FMNH2.

The catalysed reaction is 5-O-(1-carboxyvinyl)-3-phosphoshikimate = chorismate + phosphate. The protein operates within metabolic intermediate biosynthesis; chorismate biosynthesis; chorismate from D-erythrose 4-phosphate and phosphoenolpyruvate: step 7/7. Catalyzes the anti-1,4-elimination of the C-3 phosphate and the C-6 proR hydrogen from 5-enolpyruvylshikimate-3-phosphate (EPSP) to yield chorismate, which is the branch point compound that serves as the starting substrate for the three terminal pathways of aromatic amino acid biosynthesis. This reaction introduces a second double bond into the aromatic ring system. The chain is Chorismate synthase from Moorella thermoacetica (strain ATCC 39073 / JCM 9320).